The chain runs to 346 residues: Angiopoietin-related protein 7 (346 aa).

The first 26 residues, 1 to 26 (MLKKPLSAVTWLCIFIVAFVSHPAWL), serve as a signal peptide directing secretion. A coiled-coil region spans residues 39–119 (QLKAANCCEE…DIMQLQAAQT (81 aa)). A glycan (N-linked (GlcNAc...) asparagine) is linked at N58. A Fibrinogen C-terminal domain is found at 122-343 (QTSADAIYDC…RVEMKIRPED (222 aa)). A disulfide bridge connects residues C131 and C162. N-linked (GlcNAc...) asparagine glycosylation is found at N253 and N267. Cysteines 285 and 298 form a disulfide.

As to quaternary structure, homotetramer; disulfide-linked. As to expression, highly expressed in the cornea (at protein level). Expression is restricted to the stromal layer. Also detected at the junction between the corneal stromal layer and the conjuctiva. Not detected in the sclera.

The protein localises to the secreted. Functionally, has a role in the formation and organization of the extracellular matrix. In the eye, it functions as a mediator of dexamethasone-induced matrix deposition in the trabecular meshwork, the tissue responsible for the outflow of the ocular aqueous humor and for the maintenance of intraocular pressure. Is a negative regulator of angiogenesis in the cornea, and plays a major role in maintaining corneal avascularity and transparency. The chain is Angiopoietin-related protein 7 (ANGPTL7) from Homo sapiens (Human).